Here is a 249-residue protein sequence, read N- to C-terminus: Type III pantothenate kinase (249 aa).

6-13 (DAGNSRIK) lines the ATP pocket. Residues Phe77 and 98 to 101 (GVDR) each bind substrate. Catalysis depends on Asp100, which acts as the Proton acceptor. K(+) is bound at residue Asp121. Residue Ser124 participates in ATP binding. Thr177 lines the substrate pocket.

Belongs to the type III pantothenate kinase family. In terms of assembly, homodimer. The cofactor is NH4(+). K(+) serves as cofactor.

Its subcellular location is the cytoplasm. It carries out the reaction (R)-pantothenate + ATP = (R)-4'-phosphopantothenate + ADP + H(+). It functions in the pathway cofactor biosynthesis; coenzyme A biosynthesis; CoA from (R)-pantothenate: step 1/5. Functionally, catalyzes the phosphorylation of pantothenate (Pan), the first step in CoA biosynthesis. This is Type III pantothenate kinase from Teredinibacter turnerae (strain ATCC 39867 / T7901).